The following is a 725-amino-acid chain: Golgin candidate 4 (725 aa).

Residues 17–62 (HDVHDDDEDDDEDLTIYGSTNGGTDRRNSNGFRYSRSPMANGFESP) are disordered. Residues 21 to 30 (DDDEDDDEDL) show a composition bias toward acidic residues. The stretch at 66 to 132 (EIERYKAEIN…LKESRLDLSR (67 aa)) forms a coiled coil. Disordered stretches follow at residues 134-183 (SNNN…SHKK), 191-210 (LEER…EKER), and 311-349 (ASQK…KEDM). Residues 148–175 (NRSQRSPTNWKNRNQMNNGIASKPNGTE) are compositionally biased toward polar residues. Coiled coils occupy residues 191-316 (LEER…QKST), 344-407 (PGKE…QTNE), and 437-563 (EIRK…LNRM). Residues 324-349 (STEDLSRHLSSLDEEKAGTFPGKEDM) are compositionally biased toward basic and acidic residues. Positions 562–613 (RMSMDSDFLVDRRIVIKLLVTYFQRNHSREVLDLMVRMLGFSEEEKQRIGLA) constitute a GRIP domain. Basic and acidic residues predominate over residues 672-688 (ERERREAEDAANKEQEK). The tract at residues 672 to 725 (ERERREAEDAANKEQEKATVSSTQRPKYEQSDSEFSTVPLTSSNSNHRLSRLLT) is disordered. The segment covering 711 to 725 (LTSSNSNHRLSRLLT) has biased composition (low complexity).

The protein localises to the golgi apparatus. In terms of biological role, golgi matrix protein playing a role in tethering of vesicles to Golgi membranes and in maintaining the overall structure of the Golgi apparatus. The sequence is that of Golgin candidate 4 (GC4) from Arabidopsis thaliana (Mouse-ear cress).